The sequence spans 208 residues: ATP phosphoribosyltransferase (208 aa).

It belongs to the ATP phosphoribosyltransferase family. Short subfamily. As to quaternary structure, heteromultimer composed of HisG and HisZ subunits.

It localises to the cytoplasm. The catalysed reaction is 1-(5-phospho-beta-D-ribosyl)-ATP + diphosphate = 5-phospho-alpha-D-ribose 1-diphosphate + ATP. Its pathway is amino-acid biosynthesis; L-histidine biosynthesis; L-histidine from 5-phospho-alpha-D-ribose 1-diphosphate: step 1/9. In terms of biological role, catalyzes the condensation of ATP and 5-phosphoribose 1-diphosphate to form N'-(5'-phosphoribosyl)-ATP (PR-ATP). Has a crucial role in the pathway because the rate of histidine biosynthesis seems to be controlled primarily by regulation of HisG enzymatic activity. This is ATP phosphoribosyltransferase from Thermotoga petrophila (strain ATCC BAA-488 / DSM 13995 / JCM 10881 / RKU-1).